Consider the following 139-residue polypeptide: Proline-rich nuclear receptor coactivator 2 (139 aa).

Disordered regions lie at residues 1-51 (MGGG…GYNS), 61-80 (NGGKNKNFPNNQSWNSSLSG), and 89-110 (ANQNYAGAKFSEPPSPSVLPKP). Polar residues-rich tracts occupy residues 11–36 (APQSRNVSKNQQQLNRQKTKEQNSQM) and 61–79 (NGGKNKNFPNNQSWNSSLS). An SH3-binding motif is present at residues 99–105 (SEPPSPS). Residues 101 to 110 (PPSPSVLPKP) are compositionally biased toward pro residues.

The protein belongs to the PNRC family. PNRC2 subfamily. Interacts with UPF1/RENT1; preferentially interacts with hyperphosphorylated form. Interacts with DCP1A. Interacts with many nuclear receptors including ESR1, ESRRA, ESRRG, NR3C1/GR, NR5A1, PGR, TR, RAR and RXR. In terms of tissue distribution, expressed in heart, lung, muscle and brain.

It localises to the nucleus. Its subcellular location is the cytoplasm. The protein resides in the P-body. In terms of biological role, involved in nonsense-mediated mRNA decay (NMD) by acting as a bridge between the mRNA decapping complex and the NMD machinery. May act by targeting the NMD machinery to the P-body and recruiting the decapping machinery to aberrant mRNAs. Required for UPF1/RENT1 localization to the P-body. Plays a role in glucocorticoid receptor-mediated mRNA degradation by interacting with the glucocorticoid receptor NR3C1 in a ligand-dependent manner when it is bound to the 5' UTR of target mRNAs and recruiting the RNA helicase UPF1 and the mRNA-decapping enzyme DCP1A, leading to RNA decay. Also acts as a nuclear receptor coactivator. May play a role in controlling the energy balance between energy storage and energy expenditure. In Homo sapiens (Human), this protein is Proline-rich nuclear receptor coactivator 2 (PNRC2).